The sequence spans 123 residues: Large ribosomal subunit protein uL14 (123 aa).

This sequence belongs to the universal ribosomal protein uL14 family. In terms of assembly, part of the 50S ribosomal subunit. Forms a cluster with proteins L3 and L19. In the 70S ribosome, L14 and L19 interact and together make contacts with the 16S rRNA in bridges B5 and B8.

In terms of biological role, binds to 23S rRNA. Forms part of two intersubunit bridges in the 70S ribosome. The sequence is that of Large ribosomal subunit protein uL14 from Chromohalobacter salexigens (strain ATCC BAA-138 / DSM 3043 / CIP 106854 / NCIMB 13768 / 1H11).